The following is a 314-amino-acid chain: tRNA dimethylallyltransferase (314 aa).

An ATP-binding site is contributed by 11–18; sequence GPTGSGKT. 13–18 is a binding site for substrate; the sequence is TGSGKT. An interaction with substrate tRNA region spans residues 36–39; sequence DSMQ.

Belongs to the IPP transferase family. In terms of assembly, monomer. Requires Mg(2+) as cofactor.

The catalysed reaction is adenosine(37) in tRNA + dimethylallyl diphosphate = N(6)-dimethylallyladenosine(37) in tRNA + diphosphate. Functionally, catalyzes the transfer of a dimethylallyl group onto the adenine at position 37 in tRNAs that read codons beginning with uridine, leading to the formation of N6-(dimethylallyl)adenosine (i(6)A). This chain is tRNA dimethylallyltransferase, found in Chlamydia muridarum (strain MoPn / Nigg).